The sequence spans 418 residues: Serine hydroxymethyltransferase (418 aa).

Residues leucine 121 and 125-127 contribute to the (6S)-5,6,7,8-tetrahydrofolate site; that span reads GHL. At lysine 230 the chain carries N6-(pyridoxal phosphate)lysine. (6S)-5,6,7,8-tetrahydrofolate is bound by residues glutamate 246 and 355-357; that span reads SPF.

Belongs to the SHMT family. As to quaternary structure, homodimer. Pyridoxal 5'-phosphate serves as cofactor.

It is found in the cytoplasm. The enzyme catalyses (6R)-5,10-methylene-5,6,7,8-tetrahydrofolate + glycine + H2O = (6S)-5,6,7,8-tetrahydrofolate + L-serine. It participates in one-carbon metabolism; tetrahydrofolate interconversion. Its pathway is amino-acid biosynthesis; glycine biosynthesis; glycine from L-serine: step 1/1. Its function is as follows. Catalyzes the reversible interconversion of serine and glycine with tetrahydrofolate (THF) serving as the one-carbon carrier. This reaction serves as the major source of one-carbon groups required for the biosynthesis of purines, thymidylate, methionine, and other important biomolecules. Also exhibits THF-independent aldolase activity toward beta-hydroxyamino acids, producing glycine and aldehydes, via a retro-aldol mechanism. The protein is Serine hydroxymethyltransferase of Streptococcus pneumoniae serotype 2 (strain D39 / NCTC 7466).